Reading from the N-terminus, the 155-residue chain is Nodulin-related protein 2 (155 aa).

The residue at position 1 (Met1) is an N-acetylmethionine. Disordered stretches follow at residues 1-37 (MNFISDQVKKLSSSTPEEPDHNKPVEGTETATRPATN) and 85-155 (DEKS…GFLK). Positions 95–106 (DKAEKYLNDYES) are enriched in basic and acidic residues. Residues 120-130 (SQAEPASQPEP) show a composition bias toward low complexity.

Interacts with DEK3.

In terms of biological role, may be a negative regulator of the ABA signaling/synthesis pathway. In Arabidopsis thaliana (Mouse-ear cress), this protein is Nodulin-related protein 2.